The following is a 329-amino-acid chain: MHKFTKALAAIGLAAVMSQSAMAENLKLGFLVKQPEEPWFQTEWKFADKAGKDLGFEVIKIAVPDGEKTLNAIDSLAASGAKGFVICTPDPKLGSAIVAKARGYDMKVIAVDDQFVNAKGKPMDTVPLVMMAATKIGERQGQELYKEMQKRGWDVKESAVMAITANELDTARRRTTGSMDALKAAGFPEKQIYQVPTKSNDIPGAFDAANSMLVQHPEVKHWLIVGMNDSTVLGGVRATEGQGFKAADIIGIGINGVDAVSELSKAQATGFYGSLLPSPDVHGYKSSEMLYNWVAKDVEPPKFTEVTDVVLITRDNFKEELEKKGLGGK.

The first 23 residues, 1-23 (MHKFTKALAAIGLAAVMSQSAMA), serve as a signal peptide directing secretion.

It belongs to the bacterial solute-binding protein 2 family.

The protein localises to the periplasm. Its function is as follows. Involved in the high-affinity L-arabinose membrane transport system. Binds with high affinity to arabinose, but can also bind D-galactose (approximately 2-fold reduction) and D-fucose (approximately 40-fold reduction). The chain is L-arabinose-binding periplasmic protein (araF) from Escherichia coli (strain K12).